A 179-amino-acid polypeptide reads, in one-letter code: Inner membrane-spanning protein YciB (179 aa).

The next 5 membrane-spanning stretches (helical) occupy residues 22-42 (IYAA…YSWV), 50-70 (MALI…FFHN), 76-96 (WKVT…QWVM), 121-141 (LAWA…AFWL), and 149-169 (FKVF…GIYI).

It belongs to the YciB family.

It localises to the cell inner membrane. Functionally, plays a role in cell envelope biogenesis, maintenance of cell envelope integrity and membrane homeostasis. This chain is Inner membrane-spanning protein YciB, found in Shigella boydii serotype 18 (strain CDC 3083-94 / BS512).